The chain runs to 762 residues: Endonuclease MutS2 (762 aa).

Residues 1–22 form a disordered region; sequence MSDAPKRSLNPTLMMNNNNTPP. Low complexity predominate over residues 9-20; the sequence is LNPTLMMNNNNT. 333 to 340 is a binding site for ATP; it reads GVNAGGKT. Residues 688–762 form the Smr domain; it reads LDLRGQRSEE…GGSGVKIVKL (75 aa).

Belongs to the DNA mismatch repair MutS family. MutS2 subfamily. Homodimer. Binds to stalled ribosomes, contacting rRNA.

Its activity is regulated as follows. ATPase activity is stimulated by DNA. Its function is as follows. Endonuclease that is involved in the suppression of homologous recombination and may thus have a key role in the control of bacterial genetic diversity. Also involved in repairing oxidative DNA damage. Has ATPase activity. Binds DNA. Functionally, endonuclease that is involved in the suppression of homologous recombination and thus may have a key role in the control of bacterial genetic diversity. In terms of biological role, acts as a ribosome collision sensor, splitting the ribosome into its 2 subunits. Detects stalled/collided 70S ribosomes which it binds and splits by an ATP-hydrolysis driven conformational change. Acts upstream of the ribosome quality control system (RQC), a ribosome-associated complex that mediates the extraction of incompletely synthesized nascent chains from stalled ribosomes and their subsequent degradation. Probably generates substrates for RQC. The protein is Endonuclease MutS2 of Helicobacter pylori (strain ATCC 700392 / 26695) (Campylobacter pylori).